A 307-amino-acid polypeptide reads, in one-letter code: tRNA dimethylallyltransferase (307 aa).

16–23 lines the ATP pocket; the sequence is GCTAVGKT. 18–23 lines the substrate pocket; it reads TAVGKT. Residues 41–44 form an interaction with substrate tRNA region; the sequence is DSLL.

Belongs to the IPP transferase family. As to quaternary structure, monomer. It depends on Mg(2+) as a cofactor.

The enzyme catalyses adenosine(37) in tRNA + dimethylallyl diphosphate = N(6)-dimethylallyladenosine(37) in tRNA + diphosphate. Its function is as follows. Catalyzes the transfer of a dimethylallyl group onto the adenine at position 37 in tRNAs that read codons beginning with uridine, leading to the formation of N6-(dimethylallyl)adenosine (i(6)A). The chain is tRNA dimethylallyltransferase from Opitutus terrae (strain DSM 11246 / JCM 15787 / PB90-1).